We begin with the raw amino-acid sequence, 315 residues long: MENFPIINLEKLNGDERANTMEMIKDACENWGFFELVNHGIPHEVMDTVEKMTKGHYKKCMEQRFKELVASKGLEAVQAEVTDLDWESTFFLRHLPTSNISQVPDLDEEYREVMRDFAKRLEKLAEELLDLLCENLGLEKGYLKNAFYGSKGPNFGTKVSNYPPCPKPDLIKGLRAHTDAGGIILLFQDDKVSGLQLLKDEQWIDVPPMRHSIVVNLGDQLEVITNGKYKSVLHRVIAQTDGTRMSLASFYNPGSDAVIYPAKTLVEKEAEESTQVYPKFVFDDYMKLYAGLKFQAKEPRFEAMKAMESDPIASA.

In terms of domain architecture, Fe2OG dioxygenase spans 153-253; the sequence is PNFGTKVSNY…RMSLASFYNP (101 aa). Histidine 177, aspartate 179, and histidine 234 together coordinate Fe cation.

This sequence belongs to the iron/ascorbate-dependent oxidoreductase family. The cofactor is Fe cation. As to expression, predominantly expressed in the petals and the stigma and style.

The enzyme catalyses 1-aminocyclopropane-1-carboxylate + L-ascorbate + O2 = ethene + L-dehydroascorbate + hydrogen cyanide + CO2 + 2 H2O. The protein operates within alkene biosynthesis; ethylene biosynthesis via S-adenosyl-L-methionine; ethylene from S-adenosyl-L-methionine: step 2/2. The polypeptide is 1-aminocyclopropane-1-carboxylate oxidase 1 (ACO1) (Solanum lycopersicum (Tomato)).